A 495-amino-acid chain; its full sequence is Hydroxyneurosporene desaturase (495 aa).

This sequence belongs to the carotenoid/retinoid oxidoreductase family.

The enzyme catalyses rhodopin + A = (3E)-3,4-didehydrorhodopin + AH2. Its pathway is carotenoid biosynthesis; spheroidene biosynthesis. Its function is as follows. Catalyzes the introduction of C-3,4 double bonds into 1-hydroxyneurosporene (1-HO-Neu) to yield demethylspheroidene (DMS). It prefer the acyclic carotenoids such as 1-hydroxylycopene, and 1-hydroxy-gamma-carotene, whereas 1-hydroxy-3,4-didehydrolycopene and 1,1-dihydroxylycopene are much less effective. The sequence is that of Hydroxyneurosporene desaturase (crtD) from Cereibacter sphaeroides (strain ATCC 17023 / DSM 158 / JCM 6121 / CCUG 31486 / LMG 2827 / NBRC 12203 / NCIMB 8253 / ATH 2.4.1.) (Rhodobacter sphaeroides).